Here is a 144-residue protein sequence, read N- to C-terminus: Mediator of RNA polymerase II transcription subunit 21 (144 aa).

The protein belongs to the Mediator complex subunit 21 family. In terms of assembly, component of the Mediator complex, which is composed of MED1, MED4, MED6, MED7, MED8, MED9, MED10, MED11, MED12, MED13, MED13L, MED14, MED15, MED16, MED17, MED18, MED19, MED20, MED21, MED22, MED23, MED24, MED25, MED26, MED27, MED29, MED30, MED31, CCNC, CDK8 and CDC2L6/CDK11. The MED12, MED13, CCNC and CDK8 subunits form a distinct module termed the CDK8 module. Mediator containing the CDK8 module is less active than Mediator lacking this module in supporting transcriptional activation. Individual preparations of the Mediator complex lacking one or more distinct subunits have been variously termed ARC, CRSP, DRIP, PC2, SMCC and TRAP. Interacts with PPARG. Interacts with THRA in a ligand-dependent fashion.

It localises to the nucleus. Component of the Mediator complex, a coactivator involved in the regulated transcription of nearly all RNA polymerase II-dependent genes. Mediator functions as a bridge to convey information from gene-specific regulatory proteins to the basal RNA polymerase II transcription machinery. Mediator is recruited to promoters by direct interactions with regulatory proteins and serves as a scaffold for the assembly of a functional preinitiation complex with RNA polymerase II and the general transcription factors. The chain is Mediator of RNA polymerase II transcription subunit 21 (MED21) from Pongo abelii (Sumatran orangutan).